We begin with the raw amino-acid sequence, 445 residues long: Phosphoglucosamine mutase (445 aa).

Residue serine 102 is the Phosphoserine intermediate of the active site. Positions 102, 241, 243, and 245 each coordinate Mg(2+). Serine 102 is modified (phosphoserine).

The protein belongs to the phosphohexose mutase family. Requires Mg(2+) as cofactor. Activated by phosphorylation.

The catalysed reaction is alpha-D-glucosamine 1-phosphate = D-glucosamine 6-phosphate. Functionally, catalyzes the conversion of glucosamine-6-phosphate to glucosamine-1-phosphate. The sequence is that of Phosphoglucosamine mutase from Shigella dysenteriae serotype 1 (strain Sd197).